A 201-amino-acid polypeptide reads, in one-letter code: Large ribosomal subunit protein uL4 (201 aa).

A disordered region spans residues 51-73 (EVTGSGKKPWRQKGTGRARAGSV).

This sequence belongs to the universal ribosomal protein uL4 family. As to quaternary structure, part of the 50S ribosomal subunit.

One of the primary rRNA binding proteins, this protein initially binds near the 5'-end of the 23S rRNA. It is important during the early stages of 50S assembly. It makes multiple contacts with different domains of the 23S rRNA in the assembled 50S subunit and ribosome. In terms of biological role, forms part of the polypeptide exit tunnel. This chain is Large ribosomal subunit protein uL4, found in Erwinia tasmaniensis (strain DSM 17950 / CFBP 7177 / CIP 109463 / NCPPB 4357 / Et1/99).